Reading from the N-terminus, the 283-residue chain is Bifunctional protein FolD (283 aa).

NADP(+)-binding positions include 164–166 (GSS), Ile189, and Ile230.

Belongs to the tetrahydrofolate dehydrogenase/cyclohydrolase family. In terms of assembly, homodimer.

The catalysed reaction is (6R)-5,10-methylene-5,6,7,8-tetrahydrofolate + NADP(+) = (6R)-5,10-methenyltetrahydrofolate + NADPH. The enzyme catalyses (6R)-5,10-methenyltetrahydrofolate + H2O = (6R)-10-formyltetrahydrofolate + H(+). Its pathway is one-carbon metabolism; tetrahydrofolate interconversion. In terms of biological role, catalyzes the oxidation of 5,10-methylenetetrahydrofolate to 5,10-methenyltetrahydrofolate and then the hydrolysis of 5,10-methenyltetrahydrofolate to 10-formyltetrahydrofolate. The sequence is that of Bifunctional protein FolD from Fusobacterium nucleatum subsp. nucleatum (strain ATCC 25586 / DSM 15643 / BCRC 10681 / CIP 101130 / JCM 8532 / KCTC 2640 / LMG 13131 / VPI 4355).